Here is a 243-residue protein sequence, read N- to C-terminus: Ribosomal RNA small subunit methyltransferase G (243 aa).

Residues Gly-79, Phe-84, 130-131 (AE), and Arg-150 contribute to the S-adenosyl-L-methionine site. The disordered stretch occupies residues 219–243 (EKKKQTPNKYPRKPGTPGKDPIGKK).

It belongs to the methyltransferase superfamily. RNA methyltransferase RsmG family.

The protein localises to the cytoplasm. Its function is as follows. Specifically methylates the N7 position of a guanine in 16S rRNA. The chain is Ribosomal RNA small subunit methyltransferase G from Pediococcus pentosaceus (strain ATCC 25745 / CCUG 21536 / LMG 10740 / 183-1w).